The chain runs to 172 residues: Arginine repressor (172 aa).

It belongs to the ArgR family.

The protein resides in the cytoplasm. It participates in amino-acid biosynthesis; L-arginine biosynthesis [regulation]. Its function is as follows. Regulates arginine biosynthesis genes. The protein is Arginine repressor of Bifidobacterium adolescentis (strain ATCC 15703 / DSM 20083 / NCTC 11814 / E194a).